The sequence spans 554 residues: Probable pectinesterase/pectinesterase inhibitor 6 (554 aa).

The first 32 residues, 1–32, serve as a signal peptide directing secretion; sequence MDHKILLTPPKSLYTKCIITIIYVVSISHLNA. Residues 29-183 form a pectinesterase inhibitor 6 region; it reads HLNAHFITSC…TKSISNSLAV (155 aa). N-linked (GlcNAc...) asparagine glycans are attached at residues Asn-119 and Asn-172. The interval 250–540 is pectinesterase 6; sequence DLVVAKDGSG…FTVENFLDGN (291 aa). Positions 327 and 357 each coordinate substrate. Asp-380 serves as the catalytic Proton donor; for pectinesterase activity. Cysteines 394 and 414 form a disulfide. The Nucleophile; for pectinesterase activity role is filled by Asp-401. Substrate contacts are provided by Arg-460 and Trp-462.

It in the N-terminal section; belongs to the PMEI family. The protein in the C-terminal section; belongs to the pectinesterase family. Expressed in rosette leaves, flower and siliques.

The protein resides in the secreted. The protein localises to the cell wall. It carries out the reaction [(1-&gt;4)-alpha-D-galacturonosyl methyl ester](n) + n H2O = [(1-&gt;4)-alpha-D-galacturonosyl](n) + n methanol + n H(+). Its pathway is glycan metabolism; pectin degradation; 2-dehydro-3-deoxy-D-gluconate from pectin: step 1/5. Its function is as follows. Acts in the modification of cell walls via demethylesterification of cell wall pectin. The polypeptide is Probable pectinesterase/pectinesterase inhibitor 6 (PME6) (Arabidopsis thaliana (Mouse-ear cress)).